The sequence spans 698 residues: MELNITSKSNPFGDTTAENDKKMLSNAFIETADFRTLIETDDRTIVVGRRGTGKSALFIQLNEHWKKDKKILILSFSPDDSQIIGFRSMLKPFTGSFNLARAATRLLWRYAMLMEIASYISSHYKLSSQISSETLLNEHLKKWNSAQGDILRKCRLVAKEYLDENNPEESIGDLQFNLNISEIENNIVSLLERSDRKVVILMDKLDEAYEPDNIGIGIIAGLAYASIELNQKAKCIRPIIFLRDNIFRSLSKEDPDYSRNIEGQVIRLHWDWAQLLMLSAKRMKVAFKLDIEKDQRVWDRCTADDLKGRNGFKRCLQFTLYRPRDLLSLLNEAFFSAFRENRETIINTDLEYAAKSISMARLEDLWKEYQKIFPSIQVITSAFRSIEPELTVYTCLKKIEASFELIEENGDPKITSEIQLLKASGILQSLYSVGFVGIRDKNTSSYSFCHDGRTPDKGFESNEKLLIHPCYWLGLNLNRNALAPEEAEEINDEYDINIISDNSAIRNKTIGQITTHLDQIPIGNEGATEFEQWCLDALRIVFASHLTDIKSHPNGNAVQRRDIIGTNGGKSDFWKRVLEDYKTRQVVFDAKNFEELGPSEYRQLQSYLTGPYGKLGFIINRDESEVLKSGKDLDWTKEMYQSHNSLIIKLPAKYISKLLQKLRNPEKHDAIDRQMGKLLTLYETSYMAIKSTQKKRRK.

The polypeptide is Putative transposon gamma-delta 80.3 kDa protein (tnpX) (Escherichia coli (strain K12)).